A 359-amino-acid chain; its full sequence is 3-dehydroquinate synthase (359 aa).

NAD(+)-binding positions include 71-76, 105-109, 129-130, K142, K151, and 169-172; these read DGEQFK, GVIGD, TT, and CLQT. 3 residues coordinate Zn(2+): E184, H247, and H264.

This sequence belongs to the sugar phosphate cyclases superfamily. Dehydroquinate synthase family. NAD(+) serves as cofactor. It depends on Co(2+) as a cofactor. Requires Zn(2+) as cofactor.

The protein resides in the cytoplasm. It catalyses the reaction 7-phospho-2-dehydro-3-deoxy-D-arabino-heptonate = 3-dehydroquinate + phosphate. The protein operates within metabolic intermediate biosynthesis; chorismate biosynthesis; chorismate from D-erythrose 4-phosphate and phosphoenolpyruvate: step 2/7. In terms of biological role, catalyzes the conversion of 3-deoxy-D-arabino-heptulosonate 7-phosphate (DAHP) to dehydroquinate (DHQ). In Shewanella oneidensis (strain ATCC 700550 / JCM 31522 / CIP 106686 / LMG 19005 / NCIMB 14063 / MR-1), this protein is 3-dehydroquinate synthase.